Reading from the N-terminus, the 386-residue chain is Succinyl-diaminopimelate desuccinylase (386 aa).

His-73 lines the Zn(2+) pocket. The active site involves Asp-75. Position 106 (Asp-106) interacts with Zn(2+). Glu-140 acts as the Proton acceptor in catalysis. Zn(2+) is bound by residues Glu-141, Glu-169, and His-355.

This sequence belongs to the peptidase M20A family. DapE subfamily. As to quaternary structure, homodimer. Requires Zn(2+) as cofactor. The cofactor is Co(2+).

The catalysed reaction is N-succinyl-(2S,6S)-2,6-diaminopimelate + H2O = (2S,6S)-2,6-diaminopimelate + succinate. Its pathway is amino-acid biosynthesis; L-lysine biosynthesis via DAP pathway; LL-2,6-diaminopimelate from (S)-tetrahydrodipicolinate (succinylase route): step 3/3. Its function is as follows. Catalyzes the hydrolysis of N-succinyl-L,L-diaminopimelic acid (SDAP), forming succinate and LL-2,6-diaminopimelate (DAP), an intermediate involved in the bacterial biosynthesis of lysine and meso-diaminopimelic acid, an essential component of bacterial cell walls. The chain is Succinyl-diaminopimelate desuccinylase from Delftia acidovorans (strain DSM 14801 / SPH-1).